The following is a 77-amino-acid chain: Sec-independent protein translocase protein TatA (77 aa).

A helical transmembrane segment spans residues 1 to 21; the sequence is MGGLSIWHWLIVLLIVALVFG. Residues 43–77 are disordered; it reads MKESEAPADAQQLPRSGSVNVDAKDAARSSDSNKA. The segment covering 64 to 77 has biased composition (basic and acidic residues); that stretch reads DAKDAARSSDSNKA.

Belongs to the TatA/E family. The Tat system comprises two distinct complexes: a TatABC complex, containing multiple copies of TatA, TatB and TatC subunits, and a separate TatA complex, containing only TatA subunits. Substrates initially bind to the TatABC complex, which probably triggers association of the separate TatA complex to form the active translocon.

The protein localises to the cell inner membrane. In terms of biological role, part of the twin-arginine translocation (Tat) system that transports large folded proteins containing a characteristic twin-arginine motif in their signal peptide across membranes. TatA could form the protein-conducting channel of the Tat system. The sequence is that of Sec-independent protein translocase protein TatA from Burkholderia mallei (strain NCTC 10247).